Here is a 231-residue protein sequence, read N- to C-terminus: UPF0758 protein YsxA (231 aa).

The region spanning 109–231 (VIRSPEDGAN…FVSLKEKGYL (123 aa)) is the MPN domain. Positions 180, 182, and 193 each coordinate Zn(2+). The short motif at 180 to 193 (HNHPSGDPTPSRED) is the JAMM motif element.

Belongs to the UPF0758 family.

This is UPF0758 protein YsxA (ysxA) from Bacillus subtilis (strain 168).